The primary structure comprises 1018 residues: 2-oxoglutarate dehydrogenase-like, mitochondrial (1018 aa).

3 residues coordinate Ca(2+): His138, Asp151, and Asp153. Residues Arg307, Asp406, Asn439, Ile441, and Gln671 each coordinate thiamine diphosphate. Residues Asp406, Asn439, and Ile441 each coordinate Mg(2+).

Belongs to the alpha-ketoglutarate dehydrogenase family. In terms of assembly, the OGDHC complex comprises multiple copies of three catalytic enzyme components, the 2-oxoglutarate dehydrogenase (OGDH/E1), the dihydrolipoamide dehydrogenase (DLST/E2) and the dihydrolipoamide dehydrogenase (DLD/E3). OGDHL/E1-like isoenzyme may replace OGDH in the OGDHC complex in the brain. Requires thiamine diphosphate as cofactor. It depends on Mg(2+) as a cofactor.

The protein localises to the mitochondrion matrix. It carries out the reaction N(6)-[(R)-lipoyl]-L-lysyl-[protein] + 2-oxoglutarate + H(+) = N(6)-[(R)-S(8)-succinyldihydrolipoyl]-L-lysyl-[protein] + CO2. In terms of biological role, 2-oxoglutarate dehydrogenase (E1-like) component of the 2-oxoglutarate dehydrogenase multienzyme complex (OGDHC) which mediates the decarboxylation of alpha-ketoglutarate in the tricarboxylic acid cycle. The OGDHC complex catalyzes the overall conversion of 2-oxoglutarate to succinyl-CoA and CO(2) while reducing NAD(+) to NADH. The OGDHC complex is mainly active in the mitochondrion. Involved in the inhibition of cell proliferation and in apoptosis. The protein is 2-oxoglutarate dehydrogenase-like, mitochondrial (ogdhl) of Xenopus laevis (African clawed frog).